The primary structure comprises 135 residues: uncharacterized protein (135 aa).

The interval Met1–Cys75 is disordered.

This is an uncharacterized protein from Homo sapiens (Human).